The primary structure comprises 1437 residues: FYVE and coiled-coil domain-containing protein 1 (1437 aa).

The residue at position 2 (alanine 2) is an N-acetylalanine. Residues 4–30 (SSTETQLQRIIRDLQDAATELSHEFKE) are a coiled coil. The 134-residue stretch at 36–169 (TDDSTSLHKF…VQFDLAPRGY (134 aa)) folds into the RUN domain. Serine 196 is modified (phosphoserine). 3 coiled-coil regions span residues 223–270 (SLNN…VSRQ), 305–846 (SQAT…SEGA), and 873–1110 (ALTA…KDAL). Threonine 372 is modified (phosphothreonine). Serine 837 is subject to Phosphoserine. An FYVE-type zinc finger spans residues 1132–1190 (DMEVNHCHDCKREFSWIVRRHHCRICGRIFCYYCCNNYVVTKPSGKKERCCRACFQKFG). 8 residues coordinate Zn(2+): cysteine 1138, cysteine 1141, cysteine 1154, cysteine 1157, cysteine 1162, cysteine 1165, cysteine 1182, and cysteine 1185. 2 disordered regions span residues 1191–1227 (EGSG…SQGI) and 1253–1289 (SGSS…TEDV). Low complexity predominate over residues 1194-1206 (GSNDSSGSGTSQG). 2 stretches are compositionally biased toward polar residues: residues 1218-1227 (SPQSIGSQGI) and 1253-1283 (SGSS…SLTP). The GOLD domain maps to 1296-1425 (EICLLKSGEL…SKKVLYHLTV (130 aa)).

Can form homodimers. Interacts (via C-terminus) with MAP1LC3B. Interacts with RAB7A; the interaction with RAB7A induces FYCO1 recruitment to late endosomal/lysosomal compartments. Expressed in heart and testis. Expressed in the eye lens.

The protein localises to the cytoplasmic vesicle. The protein resides in the autophagosome. Its subcellular location is the endosome. It is found in the lysosome. Functionally, may mediate microtubule plus end-directed vesicle transport. This Mus musculus (Mouse) protein is FYVE and coiled-coil domain-containing protein 1 (Fyco1).